Reading from the N-terminus, the 538-residue chain is Dihomomethionine N-hydroxylase (538 aa).

The helical transmembrane segment at 8–28 (LPYPFHILLVFILSMASITLL) threads the bilayer.

Belongs to the cytochrome P450 family. Heme serves as cofactor. Highly expressed in cotyledons, leaves, stems and siliques. Detected in flowers and lateral roots, but not in the main root. Expressed only in the vascular bundles in apical plant parts.

The protein localises to the endoplasmic reticulum membrane. The catalysed reaction is an L-polyhomomethionine + 2 reduced [NADPH--hemoprotein reductase] + 2 O2 = an (E)-omega-(methylsulfanyl)-alkanal oxime + 2 oxidized [NADPH--hemoprotein reductase] + CO2 + 3 H2O + 2 H(+). It catalyses the reaction L-dihomomethionine + 2 reduced [NADPH--hemoprotein reductase] + 2 O2 = (E)-5-(methylsulfanyl)pentanal oxime + 2 oxidized [NADPH--hemoprotein reductase] + CO2 + 3 H2O + 2 H(+). The enzyme catalyses L-trihomomethionine + 2 reduced [NADPH--hemoprotein reductase] + 2 O2 = (E)-6-(methylsulfanyl)hexanal oxime + 2 oxidized [NADPH--hemoprotein reductase] + CO2 + 3 H2O + 2 H(+). In terms of biological role, catalyzes the conversion of the short chain elongated methionines di-, tri-, and tetrahomomethionine to their respective aldoximes 5-methylthiopentanaldoxime, 6-methylthiohexanaldoxime, and 7-methylheptanaldoxime. This Arabidopsis thaliana (Mouse-ear cress) protein is Dihomomethionine N-hydroxylase (CYP79F1).